Here is a 272-residue protein sequence, read N- to C-terminus: Prohibitin 1 (272 aa).

Residues 177-211 (KEFTEAVEMKQVAQQEAERARFIVEKAEQQKKAAV) are a coiled coil.

In terms of assembly, the mitochondrial prohibitin complex consists of two subunits (PHB1 and PHB2), assembled into a membrane-associated ring-shaped supercomplex of approximately 1 mDa.

It localises to the mitochondrion inner membrane. Its subcellular location is the nucleus. It is found in the cytoplasm. The protein localises to the cell membrane. Protein with pleiotropic attributes mediated in a cell-compartment- and tissue-specific manner, which include the plasma membrane-associated cell signaling functions, mitochondrial chaperone, and transcriptional co-regulator of transcription factors in the nucleus. Its function is as follows. In the mitochondria, together with PHB2, forms large ring complexes (prohibitin complexes) in the inner mitochondrial membrane (IMM) and functions as a chaperone protein that stabilizes mitochondrial respiratory enzymes and maintains mitochondrial integrity in the IMM, which is required for mitochondrial morphogenesis, neuronal survival, and normal lifespan. Functionally, in the nucleus, acts as a transcription coregulator, enhances promoter binding by TP53, a transcription factor it activates, but reduces the promoter binding by E2F1, a transcription factor it represses. In terms of biological role, in the plasma membrane, cooperates with CD86 to mediate CD86-signaling in B lymphocytes that regulates the level of IgG1 produced through the activation of distal signaling intermediates. Upon CD40 engagement, required to activate NF-kappa-B signaling pathway via phospholipase C and protein kinase C activation. The polypeptide is Prohibitin 1 (PHB1) (Gallus gallus (Chicken)).